Reading from the N-terminus, the 70-residue chain is U2-agatoxin-Ao1j (70 aa).

Positions 1–20 are cleaved as a signal peptide; that stretch reads MRAIISLLLISAMVFSMIAA. The propeptide occupies 21 to 34; it reads VPEEEGLQLSEDER. 3 disulfides stabilise this stretch: Cys-37–Cys-53, Cys-44–Cys-58, and Cys-52–Cys-68. At Leu-69 the chain carries Leucine amide.

This sequence belongs to the neurotoxin 01 (U2-agtx) family. In terms of tissue distribution, expressed by the venom gland.

The protein resides in the secreted. In terms of biological role, insect active toxin causing rapid but reversible paralysis in crickets. No activity shown in mammals. Does not show effect on mammalian voltage-gated calcium channels. The protein is U2-agatoxin-Ao1j of Agelena orientalis (Funnel-web spider).